A 251-amino-acid chain; its full sequence is Imidazole glycerol phosphate synthase subunit HisF (251 aa).

Catalysis depends on residues D11 and D130.

The protein belongs to the HisA/HisF family. As to quaternary structure, heterodimer of HisH and HisF.

Its subcellular location is the cytoplasm. The catalysed reaction is 5-[(5-phospho-1-deoxy-D-ribulos-1-ylimino)methylamino]-1-(5-phospho-beta-D-ribosyl)imidazole-4-carboxamide + L-glutamine = D-erythro-1-(imidazol-4-yl)glycerol 3-phosphate + 5-amino-1-(5-phospho-beta-D-ribosyl)imidazole-4-carboxamide + L-glutamate + H(+). It functions in the pathway amino-acid biosynthesis; L-histidine biosynthesis; L-histidine from 5-phospho-alpha-D-ribose 1-diphosphate: step 5/9. Functionally, IGPS catalyzes the conversion of PRFAR and glutamine to IGP, AICAR and glutamate. The HisF subunit catalyzes the cyclization activity that produces IGP and AICAR from PRFAR using the ammonia provided by the HisH subunit. The sequence is that of Imidazole glycerol phosphate synthase subunit HisF from Chlorobium luteolum (strain DSM 273 / BCRC 81028 / 2530) (Pelodictyon luteolum).